A 282-amino-acid polypeptide reads, in one-letter code: Parvulin-like PPIase (282 aa).

The N-terminal stretch at Met-1–Cys-20 is a signal peptide. The 94-residue stretch at Lys-138 to Glu-231 folds into the PpiC domain.

It belongs to the PpiC/parvulin rotamase family.

It is found in the cell outer membrane. The enzyme catalyses [protein]-peptidylproline (omega=180) = [protein]-peptidylproline (omega=0). This Rickettsia typhi (strain ATCC VR-144 / Wilmington) protein is Parvulin-like PPIase (plp).